A 328-amino-acid chain; its full sequence is DNA-directed RNA polymerase subunit alpha (328 aa).

The alpha N-terminal domain (alpha-NTD) stretch occupies residues Met1–Ser231. Residues Met252–Gln328 form an alpha C-terminal domain (alpha-CTD) region.

It belongs to the RNA polymerase alpha chain family. As to quaternary structure, homodimer. The RNAP catalytic core consists of 2 alpha, 1 beta, 1 beta' and 1 omega subunit. When a sigma factor is associated with the core the holoenzyme is formed, which can initiate transcription.

It carries out the reaction RNA(n) + a ribonucleoside 5'-triphosphate = RNA(n+1) + diphosphate. In terms of biological role, DNA-dependent RNA polymerase catalyzes the transcription of DNA into RNA using the four ribonucleoside triphosphates as substrates. This Chloroherpeton thalassium (strain ATCC 35110 / GB-78) protein is DNA-directed RNA polymerase subunit alpha.